We begin with the raw amino-acid sequence, 117 residues long: Fluoride-specific ion channel FluC 2 (117 aa).

4 helical membrane-spanning segments follow: residues 4-24 (FLIG…GDII), 31-51 (KFPW…GIIT), 59-79 (LSMI…TFMY), and 94-114 (LIYI…GEFI). Na(+)-binding residues include Gly69 and Thr72.

Belongs to the fluoride channel Fluc/FEX (TC 1.A.43) family.

Its subcellular location is the cell membrane. It carries out the reaction fluoride(in) = fluoride(out). Its activity is regulated as follows. Na(+) is not transported, but it plays an essential structural role and its presence is essential for fluoride channel function. Fluoride-specific ion channel. Important for reducing fluoride concentration in the cell, thus reducing its toxicity. This Clostridium acetobutylicum (strain ATCC 824 / DSM 792 / JCM 1419 / IAM 19013 / LMG 5710 / NBRC 13948 / NRRL B-527 / VKM B-1787 / 2291 / W) protein is Fluoride-specific ion channel FluC 2.